Here is a 414-residue protein sequence, read N- to C-terminus: Aspartic protease-like protein pynH (414 aa).

An N-terminal signal peptide occupies residues 1-19 (MFPCSRIWSLLVAAATASA). Residues 43–410 (FLTDIALGTP…DFEKLQVGIA (368 aa)) form the Peptidase A1 domain. N-linked (GlcNAc...) asparagine glycosylation is found at asparagine 93, asparagine 102, asparagine 140, asparagine 151, asparagine 173, asparagine 202, asparagine 221, asparagine 258, asparagine 272, asparagine 335, and asparagine 366. Residues cysteine 333 and cysteine 371 are joined by a disulfide bond.

The protein belongs to the peptidase A1 family.

It participates in secondary metabolite biosynthesis. Aspartic protease-like protein; part of the gene cluster that mediates the biosynthesis of pyranonigrins, a family of antioxidative compounds. The first step of pyranonigrins biosynthesis is performed by the hybrid PKS-NRPS synthetase that condenses 6 malonyl-CoA units to an acetyl starter unit, to form a 1,3,5-trioxotetradecane-6,8-dienyl-ACP. The enoyl reductase (ER) domain of pynA is likely to be functional during the first two rounds of polyketide chain extension, to generate the saturated C-C bonds of the alkyl side chain. PynA subsequently forms the amide bond between the acyl chain and L-serine. Although pynA has a terminal reductase domain, it appears to require the thioesterase pynI for the release of the straight-chain intermediate from pynA via the formation of a tetramic acid pyranonigrin J. The methyltransferase pynC then coverts pyranonigrin J to pyranonigrin I via N-methylation. The FAD-dependent monooxygenase pynG catalyzes an epoxidation-mediated cyclization to form the dihydro-gamma-pyrone moiety, followed by pynD-catalyzed oxidation of the alcohol to the ketone and enolization to yield the characteristic tetramic acid-fused gamma-pyrone core of pyranonigrin H. Pyranonigrin H is substrate of pynH for dehydration-mediated exo-methylene formation from the serine side chain to produce pyranonigrin E, before the oxidase pynE reduces the exo-methylene of pyranonigrin E into a pendant methyl to form pyranonigrin G. The FAD-linked oxidoreductase pynB performs the reverse reaction and converts pyranonigrin G back to pyranonigrin E. This is Aspartic protease-like protein pynH from Aspergillus niger (strain ATCC MYA-4892 / CBS 513.88 / FGSC A1513).